The primary structure comprises 174 residues: Repair DNA polymerase X (174 aa).

An involved in ssDNA binding region spans residues 42–51; the sequence is REEKMLNDVD. Residues Asp-49 and Asp-51 each contribute to the Mg(2+) site. Cys-81 and Cys-86 are joined by a disulfide. Asp-100 is a Mg(2+) binding site.

This sequence belongs to the DNA polymerase type-X family. Mg(2+) is required as a cofactor.

The protein resides in the virion. The enzyme catalyses DNA(n) + a 2'-deoxyribonucleoside 5'-triphosphate = DNA(n+1) + diphosphate. Its function is as follows. Error-prone polymerase lacking a proofreading 3'-5' exonuclease which catalyzes the gap-filling reaction during the DNA repair process. Specifically binds intermediates in the single-nucleotide base-excision repair process. Also catalyzes DNA polymerization with low nucleotide-insertion fidelity. Probably acts as a strategic DNA mutase, which gives rise to a rapid emergence of variants. Generates mismatched G-G pairs, in that case, the polymerase first binds the deoxynucleotide followed by mismatch formation. Together with the viral DNA ligase, fills the single nucleotide gaps generated by the AP endonuclease. Binds DNA with high affinity via the helix alphaE. In Ornithodoros (relapsing fever ticks), this protein is Repair DNA polymerase X.